The following is a 67-amino-acid chain: Large ribosomal subunit protein uL29 (67 aa).

The protein belongs to the universal ribosomal protein uL29 family.

The chain is Large ribosomal subunit protein uL29 from Moorella thermoacetica (strain ATCC 39073 / JCM 9320).